A 187-amino-acid chain; its full sequence is Elongation factor P (187 aa).

It belongs to the elongation factor P family.

The protein resides in the cytoplasm. It functions in the pathway protein biosynthesis; polypeptide chain elongation. In terms of biological role, involved in peptide bond synthesis. Stimulates efficient translation and peptide-bond synthesis on native or reconstituted 70S ribosomes in vitro. Probably functions indirectly by altering the affinity of the ribosome for aminoacyl-tRNA, thus increasing their reactivity as acceptors for peptidyl transferase. The sequence is that of Elongation factor P from Mycoplasmopsis agalactiae (strain NCTC 10123 / CIP 59.7 / PG2) (Mycoplasma agalactiae).